Consider the following 360-residue polypeptide: Phospho-N-acetylmuramoyl-pentapeptide-transferase (360 aa).

The next 10 membrane-spanning stretches (helical) occupy residues Tyr-21–Gly-41, Thr-73–Leu-93, Val-98–Trp-118, Trp-132–Gly-152, Phe-168–Ser-188, Gly-199–Thr-219, Ala-236–Tyr-256, Val-263–Leu-283, Leu-288–Val-308, and Val-338–Lys-358.

It belongs to the glycosyltransferase 4 family. MraY subfamily. The cofactor is Mg(2+).

It is found in the cell inner membrane. It catalyses the reaction UDP-N-acetyl-alpha-D-muramoyl-L-alanyl-gamma-D-glutamyl-meso-2,6-diaminopimeloyl-D-alanyl-D-alanine + di-trans,octa-cis-undecaprenyl phosphate = di-trans,octa-cis-undecaprenyl diphospho-N-acetyl-alpha-D-muramoyl-L-alanyl-D-glutamyl-meso-2,6-diaminopimeloyl-D-alanyl-D-alanine + UMP. Its pathway is cell wall biogenesis; peptidoglycan biosynthesis. In terms of biological role, catalyzes the initial step of the lipid cycle reactions in the biosynthesis of the cell wall peptidoglycan: transfers peptidoglycan precursor phospho-MurNAc-pentapeptide from UDP-MurNAc-pentapeptide onto the lipid carrier undecaprenyl phosphate, yielding undecaprenyl-pyrophosphoryl-MurNAc-pentapeptide, known as lipid I. This chain is Phospho-N-acetylmuramoyl-pentapeptide-transferase, found in Actinobacillus pleuropneumoniae serotype 7 (strain AP76).